The primary structure comprises 103 residues: c-Myc-binding protein (103 aa).

The protein belongs to the AMY1 family. In terms of assembly, binds via its C-terminal region to the N-terminal region of MYC. Associates with AKAP1/S-AKAP84. Interacts with MYCBPAP. Interacts with CFAP91. In terms of tissue distribution, highly expressed in heart, placenta, pancreas, skeletal muscle and kidney. Also present at low levels in lung.

The protein localises to the cytoplasm. Its subcellular location is the nucleus. It is found in the mitochondrion. Its function is as follows. May control the transcriptional activity of MYC. Stimulates the activation of E box-dependent transcription by MYC. This is c-Myc-binding protein from Homo sapiens (Human).